The chain runs to 492 residues: Glutamyl-tRNA(Gln) amidotransferase subunit A (492 aa).

Residues Lys79 and Ser154 each act as charge relay system in the active site. Ser178 (acyl-ester intermediate) is an active-site residue.

This sequence belongs to the amidase family. GatA subfamily. As to quaternary structure, heterotrimer of A, B and C subunits.

The catalysed reaction is L-glutamyl-tRNA(Gln) + L-glutamine + ATP + H2O = L-glutaminyl-tRNA(Gln) + L-glutamate + ADP + phosphate + H(+). Its function is as follows. Allows the formation of correctly charged Gln-tRNA(Gln) through the transamidation of misacylated Glu-tRNA(Gln) in organisms which lack glutaminyl-tRNA synthetase. The reaction takes place in the presence of glutamine and ATP through an activated gamma-phospho-Glu-tRNA(Gln). This is Glutamyl-tRNA(Gln) amidotransferase subunit A from Acinetobacter baylyi (strain ATCC 33305 / BD413 / ADP1).